A 396-amino-acid polypeptide reads, in one-letter code: Maltose/maltodextrin-binding periplasmic protein (396 aa).

A signal peptide spans 1–26 (MKIKTGARILALSALTTMMFSASALA).

The protein belongs to the bacterial solute-binding protein 1 family. As to quaternary structure, the complex is composed of two ATP-binding proteins (MalK), two transmembrane proteins (MalG and MalF) and a solute-binding protein (MalE).

The protein resides in the periplasm. Part of the ABC transporter complex MalEFGK involved in maltose/maltodextrin import. Binds maltose and higher maltodextrins. This is Maltose/maltodextrin-binding periplasmic protein (malE) from Klebsiella aerogenes (Enterobacter aerogenes).